The primary structure comprises 316 residues: Glutamyl endopeptidase (316 aa).

The signal sequence occupies residues M1 to A30. Residues A31–K94 constitute a propeptide that is removed on maturation. An intrachain disulfide couples C126 to C142. Catalysis depends on charge relay system residues H141 and S261. C275 and C279 are oxidised to a cystine.

It belongs to the peptidase S1B family.

Its subcellular location is the secreted. The catalysed reaction is Preferential cleavage: Glu-|-Xaa, Asp-|-Xaa.. Functionally, specific for hydrolysis of peptide bonds on the carboxyl side of acidic amino acid residues, with a strong preference for Glu. The chain is Glutamyl endopeptidase (blaSE) from Bacillus licheniformis (strain ATCC 14580 / DSM 13 / JCM 2505 / CCUG 7422 / NBRC 12200 / NCIMB 9375 / NCTC 10341 / NRRL NRS-1264 / Gibson 46).